Here is a 447-residue protein sequence, read N- to C-terminus: MNAWEVNFDGLVGLTHHYAGLSFGNEASTRHRFQVSNPRLAAKQGLLKMKALADAGFPQAVIPPHERPFIPVLRQLGFSGSDEQVLEKVARQAPHWLSSVSSASPMWVANAATIAPSADTLDGKVHLTVANLNNKFHRSLEAPVTESLLKAIFNDEEKFSVHSALPQVALLGDEGAANHNRLGGHYGEPGMQLFVYGREEGNDTRPSRYPARQTREASEAVARLNQVNPQQVIFAQQNPDVIDQGVFHNDVIAVSNRQVLFCHQQAFARQSQLLANLRARVNGFMAIEVPATQVSVSDTVSTYLFNSQLLSRDDGSMMLVLPQECREHAGVWGYLNELLAADNPISELKVFDLRESMANGGGPACLRLRVVLTEEERRAVNPAVMMNDTLFNALNDWVDRYYRDRLTAADLADPQLLREGREALDVLSQLLNLGSVYPFQREGGGNG.

Substrate-binding positions include 19 to 28 (AGLSFGNEAS), asparagine 110, and 137 to 138 (HR). Glutamate 174 is an active-site residue. Arginine 212 contacts substrate. The active site involves histidine 248. Positions 250 and 359 each coordinate substrate. Residue cysteine 365 is the Nucleophile of the active site.

The protein belongs to the succinylarginine dihydrolase family. In terms of assembly, homodimer.

It catalyses the reaction N(2)-succinyl-L-arginine + 2 H2O + 2 H(+) = N(2)-succinyl-L-ornithine + 2 NH4(+) + CO2. Its pathway is amino-acid degradation; L-arginine degradation via AST pathway; L-glutamate and succinate from L-arginine: step 2/5. In terms of biological role, catalyzes the hydrolysis of N(2)-succinylarginine into N(2)-succinylornithine, ammonia and CO(2). The polypeptide is N-succinylarginine dihydrolase (Escherichia coli (strain K12 / MC4100 / BW2952)).